The following is a 317-amino-acid chain: Peroxidase 22.3 (317 aa).

An N-terminal signal peptide occupies residues 1–25 (MASATNSSLSLMLLVAAAMASVASA). A Pyrrolidone carboxylic acid modification is found at Gln-26. 2 cysteine pairs are disulfide-bonded: Cys-36–Cys-111 and Cys-69–Cys-74. The Proton acceptor role is filled by His-67. 5 residues coordinate Ca(2+): Asp-68, Val-71, Gly-73, Asp-75, and Ser-77. Asn-112 carries N-linked (GlcNAc...) asparagine glycosylation. 2 disulfides stabilise this stretch: Cys-117–Cys-312 and Cys-196–Cys-221. Pro-159 provides a ligand contact to substrate. An N-linked (GlcNAc...) asparagine glycan is attached at Asn-171. His-189 contacts heme b. Residue Thr-190 coordinates Ca(2+). Asn-205 is a glycosylation site (N-linked (GlcNAc...) asparagine). The Ca(2+) site is built by Asp-236, Thr-239, and Asp-244.

This sequence belongs to the peroxidase family. Classical plant (class III) peroxidase subfamily. Heme b is required as a cofactor. Ca(2+) serves as cofactor.

Its subcellular location is the secreted. It carries out the reaction H2O2 + AH2 = A + 2 H2O. Its function is as follows. Removal of H(2)O(2), oxidation of toxic reductants, biosynthesis and degradation of lignin, suberization, auxin catabolism, response to environmental stresses such as wounding, pathogen attack and oxidative stress. These functions might be dependent on each isozyme/isoform in each plant tissue. This chain is Peroxidase 22.3, found in Oryza sativa subsp. japonica (Rice).